A 341-amino-acid polypeptide reads, in one-letter code: HTH-type transcriptional repressor PurR (341 aa).

The HTH lacI-type domain maps to 2-56 (ATIKDVAKRANVSTTTVSHVINKTRFVSEETRNAVWAAIKELHYSPSAVARSLKV). A DNA-binding region (H-T-H motif) is located at residues 4-23 (IKDVAKRANVSTTTVSHVIN). The DNA-binding element occupies 48-56 (SAVARSLKV). Hypoxanthine-binding residues include Y73, R190, T192, F221, and D275.

In terms of assembly, homodimer.

Its pathway is purine metabolism; purine nucleotide biosynthesis [regulation]. In terms of biological role, is the main repressor of the genes involved in the de novo synthesis of purine nucleotides, regulating purB, purC, purEK, purF, purHD, purL, purMN and guaBA expression. PurR is allosterically activated to bind its cognate DNA by binding the purine corepressors, hypoxanthine or guanine, thereby effecting transcription repression. In Escherichia coli O139:H28 (strain E24377A / ETEC), this protein is HTH-type transcriptional repressor PurR.